Here is a 507-residue protein sequence, read N- to C-terminus: Myocyte-specific enhancer factor 2A (507 aa).

Positions 3-57 (RKKIQITRIMDERNRQVTFTKRKFGLMKKAYELSVLCDCEIALIIFNSSNKLFQY) constitute an MADS-box domain. At Lys-30 the chain carries Phosphoserine. The mef2-type DNA-binding region spans 58–86 (ASTDMDKVLLKYTEYNEPHESRTNSDIVE). The residue at position 59 (Ser-59) is a Phosphoserine; by CK2. Position 98 is a phosphoserine (Ser-98). The span at 173 to 183 (TLTDSSMLSPP) shows a compositional bias: low complexity. The segment at 173-229 (TLTDSSMLSPPQTTLHRNVSPGAPQRPPSTGNAGGMLSTTDLTVPNGAGSSPVGNGF) is disordered. A compositionally biased stretch (polar residues) spans 209–229 (LSTTDLTVPNGAGSSPVGNGF). Phosphoserine is present on Ser-235. Positions 243–270 (GANSLGKVMPTKSPPPPGGGNLGMNSRK) are disordered. At Lys-249 the chain carries N6-acetyllysine. Position 255 is a phosphoserine; by MAPK14 (Ser-255). Positions 266–283 (MNSRKPDLRVVIPPSSKG) are required for interaction with MAPKs. Residues 289-296 (SEEEELEL) form a beta domain region. 2 positions are modified to phosphothreonine; by MAPK7 and MAPK14: Thr-312 and Thr-319. Thr-312 is modified (phosphothreonine; by NLK). Ser-355 carries the phosphoserine; by MAPK7 modification. The interval 397-507 (NQNISIKSEP…KRMRMDAWVT (111 aa)) is disordered. Position 403 is an N6-acetyllysine; alternate (Lys-403). A Glycyl lysine isopeptide (Lys-Gly) (interchain with G-Cter in SUMO); alternate cross-link involves residue Lys-403. The residue at position 408 (Ser-408) is a Phosphoserine; by CDK5. Thr-415 is modified (phosphothreonine). The span at 420-429 (QQQQQQQQQQ) shows a compositional bias: low complexity. The segment covering 430 to 445 (QPPPPPQPQPQPPQPQ) has biased composition (pro residues). Phosphoserine; by MAPK is present on Ser-453. The span at 453-466 (SPVDSLSSSSSSYD) shows a compositional bias: low complexity. 2 stretches are compositionally biased toward basic and acidic residues: residues 467 to 477 (GSDREDPRGDF) and 488 to 507 (NTED…AWVT).

Belongs to the MEF2 family. Binds DNA as a homo- or heterodimer. Dimerizes with MEF2D. Interacts with HDAC7. Interacts with PIAS1; the interaction enhances sumoylation. Interacts with HDAC4, HDAC9 and SLC2A4RG. Interacts (via the N-terminal) with MAPK7; the interaction results in the phosphorylation and transcriptional activity of MEF2A. Constitutive phosphorylation on Ser-408 promotes Lys-403 sumoylation thus preventing acetylation at this site. Dephosphorylation on Ser-408 by PPP3CA upon neuron depolarization promotes a switch from sumoylation to acetylation on residue Lys-403 leading to inhibition of dendrite claw differentiation. Phosphorylation on Thr-312 and Thr-319 are the main sites involved in p38 MAPK signaling and activate transcription. Phosphorylated on these sites by MAPK14/p38alpha and MAPK11/p38beta, but not by MAPK13/p38delta nor by MAPK12/p38gamma. Phosphorylation on Ser-408 by CDK5 induced by neurotoxicity inhibits MEF2A transcriptional activation leading to apoptosis of cortical neurons. Phosphorylation on Thr-312, Thr-319 and Ser-355 can be induced by EGF. Post-translationally, sumoylation on Lys-403 is enhanced by PIAS1 and represses transcriptional activity. Phosphorylation on Ser-408 is required for sumoylation. Has no effect on nuclear location nor on DNA binding. Sumoylated with SUMO1 and, to a lesser extent with SUMO2 and SUMO3. PIASx facilitates sumoylation in postsynaptic dendrites in the cerebellar cortex and promotes their morphogenesis. In terms of processing, acetylation on Lys-403 activates transcriptional activity. Acetylated by p300 on several sites in diffentiating myocytes. Acetylation on Lys-4 increases DNA binding and transactivation. Hyperacetylation by p300 leads to enhanced cardiac myocyte growth and heart failure. Proteolytically cleaved in cerebellar granule neurons on several sites by caspase 3 and caspase 7 following neurotoxicity. Preferentially cleaves the CDK5-mediated hyperphosphorylated form which leads to neuron apoptosis and transcriptional inactivation. Isoform MEF2 and isoform MEFA are expressed only in skeletal and cardiac muscle and in the brain. Isoform RSRFC4 and isoform RSRFC9 are expressed in all tissues examined.

It is found in the nucleus. Functionally, transcriptional activator which binds specifically to the MEF2 element, 5'-YTA[AT](4)TAR-3', found in numerous muscle-specific genes. Also involved in the activation of numerous growth factor- and stress-induced genes. Mediates cellular functions not only in skeletal and cardiac muscle development, but also in neuronal differentiation and survival. Plays diverse roles in the control of cell growth, survival and apoptosis via p38 MAPK signaling in muscle-specific and/or growth factor-related transcription. In cerebellar granule neurons, phosphorylated and sumoylated MEF2A represses transcription of NUR77 promoting synaptic differentiation. Associates with chromatin to the ZNF16 promoter. This chain is Myocyte-specific enhancer factor 2A (MEF2A), found in Homo sapiens (Human).